The chain runs to 763 residues: Phosphoglycerol transferase I (763 aa).

4 consecutive transmembrane segments (helical) span residues 1–21, 26–46, 77–97, and 108–128; these read MSELLSVALFLASVLIYAWKA, WWFAATLTVLGLFVILNITLY, ILPGIGIALALVAVFGALGWI, and VGYSLLALLLALGSVDASPAF.

Belongs to the OpgB family.

It localises to the cell inner membrane. The enzyme catalyses a phosphatidylglycerol + a membrane-derived-oligosaccharide D-glucose = a 1,2-diacyl-sn-glycerol + a membrane-derived-oligosaccharide 6-(glycerophospho)-D-glucose.. Its pathway is glycan metabolism; osmoregulated periplasmic glucan (OPG) biosynthesis. Functionally, transfers a phosphoglycerol residue from phosphatidylglycerol to the membrane-bound nascent glucan backbones. This Salmonella paratyphi B (strain ATCC BAA-1250 / SPB7) protein is Phosphoglycerol transferase I.